Here is a 94-residue protein sequence, read N- to C-terminus: Cell division topological specificity factor (94 aa).

Belongs to the MinE family.

Its function is as follows. Prevents the cell division inhibition by proteins MinC and MinD at internal division sites while permitting inhibition at polar sites. This ensures cell division at the proper site by restricting the formation of a division septum at the midpoint of the long axis of the cell. This is Cell division topological specificity factor from Alkaliphilus metalliredigens (strain QYMF).